A 528-amino-acid chain; its full sequence is Poly(A) RNA polymerase GLD2 (528 aa).

Disordered regions lie at residues 1-41 and 99-121; these read MYPN…QPQQ and RDQSPLISPASPSSSFQNRKRRS. Low complexity-rich tracts occupy residues 16–32 and 102–113; these read PCEQQQPPLEQSQEQPL and SPLISPASPSSS. Mg(2+) contacts are provided by aspartate 259 and aspartate 261. Residues 428-481 form the PAP-associated domain; it reads LGDLLLGFLKYFAIEFDWSKDIISVREAKALPRSDDYEWRNKFICVEEPYDRTN.

The protein belongs to the DNA polymerase type-B-like family. GLD2 subfamily. In terms of assembly, component of a complex at least composed of cpeb1, cpsf1, tent2/gld2, pabpc1/ePAB, parn and sympk. Following oocyte maturation, parn is expelled from the complex. Interacts with rbm9 and sympk. Requires Mg(2+) as cofactor. The cofactor is Mn(2+).

It localises to the cytoplasm. The catalysed reaction is RNA(n) + ATP = RNA(n)-3'-adenine ribonucleotide + diphosphate. Cytoplasmic poly(A) RNA polymerase that adds successive AMP monomers to the 3'-end of specific RNAs, forming a poly(A) tail. In contrast to the canonical nuclear poly(A) RNA polymerase, it only adds poly(A) to selected cytoplasmic mRNAs during oocyte maturation. Plays a central role during oocyte maturation by mediating polyadenylation of dormant mRNAs, which contain 5'AAUAAA-3' sequence in their 3'-UTR. In immature oocytes, polyadenylation of poly(A) tails is counteracted by the ribonuclease parn. During maturation parn is excluded from the ribonucleoprotein complex, allowing poly(A) elongation and activation of mRNAs. May not play a role in replication-dependent histone mRNA degradation. In Xenopus tropicalis (Western clawed frog), this protein is Poly(A) RNA polymerase GLD2 (tent2).